Here is a 218-residue protein sequence, read N- to C-terminus: Large ribosomal subunit protein bL25 (218 aa).

Residues 186–218 are disordered; that stretch reads AVEEEVPAEDEEIMPEPEVIGEEDEGDEEEPEE.

Belongs to the bacterial ribosomal protein bL25 family. CTC subfamily. Part of the 50S ribosomal subunit; part of the 5S rRNA/L5/L18/L25 subcomplex. Contacts the 5S rRNA. Binds to the 5S rRNA independently of L5 and L18.

This is one of the proteins that binds to the 5S RNA in the ribosome where it forms part of the central protuberance. In Halothermothrix orenii (strain H 168 / OCM 544 / DSM 9562), this protein is Large ribosomal subunit protein bL25.